Here is a 491-residue protein sequence, read N- to C-terminus: MANYFNTLNLRQQLAQLGKCRFMGRDEFADGASYLQGKKVVIVGCGAQGLNQGLNMRDSGLDISYALRKEAIAEKRASWRKATENGFKVGTYEELIPQADLVVNLTPDKQHSDVVHTVQPLMKDGAALGYSHGFNIVEVGEQIRKDITVVMVAPKCPGTEVREEYKRGFGVPTLIAVHPENDPKGEGMAIAKAWAAATGGHRAGVLESSFVAEVKSDLMGEQTILCGMLQAGSLLCFDRLVEEGTDPAYAEKLIQFGWETITEALKQGGITLMMDRLSNPAKLRAYALSEQLKEIMAPLFQKHMDDIISGEFSSGMMADWANDDKKLLTWREETGKTAFETAPQYEGKIGEQEYFDKGVLMIAMVKAGVELAFETMVDSGIIEESAYYESLHELPLIANTIARKRLYEMNVVISDTAEYGNYLFSYACVPLLKPFMAELQPGDLGKAIPEGAVDNAQLRDVNEAIRSHAIEQVGKKLRGYMTDMKRIAVAG.

The region spanning 15–208 (AQLGKCRFMG…GGHRAGVLES (194 aa)) is the KARI N-terminal Rossmann domain. NADP(+) contacts are provided by residues 45–48 (CGAQ), Arg68, Arg76, Ser78, and 108–110 (DKQ). His132 is a catalytic residue. Gly158 lines the NADP(+) pocket. 2 consecutive KARI C-terminal knotted domains span residues 209–344 (SFVA…TAPQ) and 345–484 (YEGK…MTDM). 4 residues coordinate Mg(2+): Asp217, Glu221, Glu389, and Glu393. Substrate is bound at residue Ser414.

This sequence belongs to the ketol-acid reductoisomerase family. Mg(2+) serves as cofactor.

The catalysed reaction is (2R)-2,3-dihydroxy-3-methylbutanoate + NADP(+) = (2S)-2-acetolactate + NADPH + H(+). It catalyses the reaction (2R,3R)-2,3-dihydroxy-3-methylpentanoate + NADP(+) = (S)-2-ethyl-2-hydroxy-3-oxobutanoate + NADPH + H(+). Its pathway is amino-acid biosynthesis; L-isoleucine biosynthesis; L-isoleucine from 2-oxobutanoate: step 2/4. It participates in amino-acid biosynthesis; L-valine biosynthesis; L-valine from pyruvate: step 2/4. Functionally, involved in the biosynthesis of branched-chain amino acids (BCAA). Catalyzes an alkyl-migration followed by a ketol-acid reduction of (S)-2-acetolactate (S2AL) to yield (R)-2,3-dihydroxy-isovalerate. In the isomerase reaction, S2AL is rearranged via a Mg-dependent methyl migration to produce 3-hydroxy-3-methyl-2-ketobutyrate (HMKB). In the reductase reaction, this 2-ketoacid undergoes a metal-dependent reduction by NADPH to yield (R)-2,3-dihydroxy-isovalerate. The chain is Ketol-acid reductoisomerase (NADP(+)) from Escherichia coli O7:K1 (strain IAI39 / ExPEC).